The primary structure comprises 1189 residues: Increased DNA methylation 1 (1189 aa).

2 disordered regions span residues 475–498 (KNLHRRSKKISDIKPASLDQHDSL) and 523–597 (SRDE…CRLL). Residues 523–532 (SRDERLRNEK) are compositionally biased toward basic and acidic residues. Basic residues-rich tracts occupy residues 541-550 (KKGRKKARKH) and 565-590 (NKGKFSRSSQKKKTQKPKARTKKRNN). The PHD-type 1 zinc-finger motif lies at 726-771 (DDSCGVCGDGGELICCDNCPSTFHQACLSMQVLPEGSWYCSSCTCW). The segment at 767-823 (SCTCWICSELVSDNAERSQDFKCSQCAHKYHGTCLQGISKRRKLFPETYFCGKNCEK) adopts a PHD-type 2; degenerate zinc-finger fold. The 146-residue stretch at 879 to 1024 (MEESFLSMVD…GTTLLKKTLY (146 aa)) folds into the N-acetyltransferase domain. Residues 1031 to 1157 (TMKGVCLSKE…SSSSAALEEV (127 aa)) are disordered. Basic and acidic residues-rich tracts occupy residues 1038–1050 (SKERNNPSNKEAD), 1102–1114 (NPSRDSNANDRPN), and 1129–1145 (CLQKDVSKLSEEGKETT). The segment covering 1147–1157 (ASSSSAALEEV) has biased composition (low complexity).

In terms of assembly, interacts (via N-terminus) with IDM2. Interacts with IMD3. Part of a complex made of MBD7, IDM1, IDM2 and IDM3. As to expression, expressed in cotyledons and hypocotyls in young seedlings.

The protein localises to the nucleus. Its function is as follows. Histone H3 acetyltransferase that binds methylated DNA at chromatin sites lacking histone H3K4 di- or trimethylation and catalyzes H3K18 and H3K23 acetylation. Prevents the transcriptional silencing of transgenes and of some endogenous genes. Requires the presence of IDM2 for efficient H3K18 acetylation, but not for H3K23 acetylation. This is Increased DNA methylation 1 from Arabidopsis thaliana (Mouse-ear cress).